The primary structure comprises 492 residues: 1-aminocyclopropane-1-carboxylate synthase 1 (492 aa).

An N6-(pyridoxal phosphate)lysine modification is found at K277.

It belongs to the class-I pyridoxal-phosphate-dependent aminotransferase family. As to quaternary structure, homodimer. It depends on pyridoxal 5'-phosphate as a cofactor.

It carries out the reaction S-adenosyl-L-methionine = 1-aminocyclopropane-1-carboxylate + S-methyl-5'-thioadenosine + H(+). It participates in alkene biosynthesis; ethylene biosynthesis via S-adenosyl-L-methionine; ethylene from S-adenosyl-L-methionine: step 1/2. Its function is as follows. Catalyzes the formation of 1-aminocyclopropane-1-carboxylate, a direct precursor of ethylene in higher plants. This Prunus mume (Japanese apricot) protein is 1-aminocyclopropane-1-carboxylate synthase 1 (ACS1).